We begin with the raw amino-acid sequence, 424 residues long: Serine--tRNA ligase (424 aa).

L-serine is bound at residue 231-233; it reads TAE. 262–264 serves as a coordination point for ATP; that stretch reads RSE. Glu285 is an L-serine binding site. Position 349–352 (349–352) interacts with ATP; sequence EISS. Ser385 lines the L-serine pocket.

The protein belongs to the class-II aminoacyl-tRNA synthetase family. Type-1 seryl-tRNA synthetase subfamily. In terms of assembly, homodimer. The tRNA molecule binds across the dimer.

It localises to the cytoplasm. It carries out the reaction tRNA(Ser) + L-serine + ATP = L-seryl-tRNA(Ser) + AMP + diphosphate + H(+). The catalysed reaction is tRNA(Sec) + L-serine + ATP = L-seryl-tRNA(Sec) + AMP + diphosphate + H(+). It participates in aminoacyl-tRNA biosynthesis; selenocysteinyl-tRNA(Sec) biosynthesis; L-seryl-tRNA(Sec) from L-serine and tRNA(Sec): step 1/1. In terms of biological role, catalyzes the attachment of serine to tRNA(Ser). Is also able to aminoacylate tRNA(Sec) with serine, to form the misacylated tRNA L-seryl-tRNA(Sec), which will be further converted into selenocysteinyl-tRNA(Sec). The protein is Serine--tRNA ligase of Bacillus cereus (strain G9842).